The chain runs to 241 residues: Methylthioribulose-1-phosphate dehydratase (241 aa).

Cys-96 contributes to the substrate binding site. Residues His-114 and His-116 each contribute to the Zn(2+) site. Glu-138 functions as the Proton donor/acceptor in the catalytic mechanism. A Zn(2+)-binding site is contributed by His-194.

It belongs to the aldolase class II family. MtnB subfamily. Zn(2+) serves as cofactor.

The protein resides in the cytoplasm. The enzyme catalyses 5-(methylsulfanyl)-D-ribulose 1-phosphate = 5-methylsulfanyl-2,3-dioxopentyl phosphate + H2O. It participates in amino-acid biosynthesis; L-methionine biosynthesis via salvage pathway; L-methionine from S-methyl-5-thio-alpha-D-ribose 1-phosphate: step 2/6. Its function is as follows. Catalyzes the dehydration of methylthioribulose-1-phosphate (MTRu-1-P) into 2,3-diketo-5-methylthiopentyl-1-phosphate (DK-MTP-1-P). Functions in the methionine salvage pathway. May play a role in apoptosis. The protein is Methylthioribulose-1-phosphate dehydratase of Danio rerio (Zebrafish).